We begin with the raw amino-acid sequence, 30 residues long: APLEDEDDLELLEKVKRDRKKRLERQGAIN.

It is found in the plastid. It localises to the chloroplast thylakoid lumen. The chain is Thylakoid lumenal 13.3 kDa protein from Spinacia oleracea (Spinach).